The following is a 120-amino-acid chain: uncharacterized protein (120 aa).

This sequence to M.tuberculosis Rv0026 and Rv0739.

This is an uncharacterized protein from Mycobacterium tuberculosis (strain CDC 1551 / Oshkosh).